The sequence spans 512 residues: Sodium/proline symporter (512 aa).

13 consecutive transmembrane segments (helical) span residues 16-36 (WQTY…GFYG), 54-74 (IGPY…WMIM), 85-105 (LSAM…YFVV), 139-159 (IISG…GFVS), 174-194 (FGLI…GYLA), 200-220 (FFQG…AMMN), 240-260 (LFKG…LGYF), 286-306 (ISWM…GIAF), 327-347 (VLFH…AIMS), 381-401 (FVMI…AIAW), 410-430 (LVGN…LFAL), 438-458 (AGAV…IAWI), and 467-487 (IFGL…TYVV).

The protein belongs to the sodium:solute symporter (SSF) (TC 2.A.21) family.

It localises to the cell membrane. The enzyme catalyses L-proline(in) + Na(+)(in) = L-proline(out) + Na(+)(out). Functionally, catalyzes the sodium-dependent uptake of extracellular L-proline. Since most S.aureus strains are L-proline auxotrophs, this transporter may aid the bacterial persistence during an infection of tissues with low proline concentrations. In Staphylococcus aureus (strain Newman), this protein is Sodium/proline symporter (putP).